We begin with the raw amino-acid sequence, 348 residues long: Phosphate acyltransferase (348 aa).

It belongs to the PlsX family. As to quaternary structure, homodimer. Probably interacts with PlsY.

The protein localises to the cytoplasm. The enzyme catalyses a fatty acyl-[ACP] + phosphate = an acyl phosphate + holo-[ACP]. The protein operates within lipid metabolism; phospholipid metabolism. In terms of biological role, catalyzes the reversible formation of acyl-phosphate (acyl-PO(4)) from acyl-[acyl-carrier-protein] (acyl-ACP). This enzyme utilizes acyl-ACP as fatty acyl donor, but not acyl-CoA. This is Phosphate acyltransferase from Rhizobium etli (strain ATCC 51251 / DSM 11541 / JCM 21823 / NBRC 15573 / CFN 42).